We begin with the raw amino-acid sequence, 318 residues long: Ribonuclease Z (318 aa).

Residues H62, H64, D66, H67, H139, D210, and H268 each contribute to the Zn(2+) site. The active-site Proton acceptor is the D66.

This sequence belongs to the RNase Z family. In terms of assembly, homodimer. It depends on Zn(2+) as a cofactor.

The enzyme catalyses Endonucleolytic cleavage of RNA, removing extra 3' nucleotides from tRNA precursor, generating 3' termini of tRNAs. A 3'-hydroxy group is left at the tRNA terminus and a 5'-phosphoryl group is left at the trailer molecule.. Its function is as follows. Zinc phosphodiesterase, which displays some tRNA 3'-processing endonuclease activity. Probably involved in tRNA maturation, by removing a 3'-trailer from precursor tRNA. In Gloeothece citriformis (strain PCC 7424) (Cyanothece sp. (strain PCC 7424)), this protein is Ribonuclease Z.